The sequence spans 145 residues: uncharacterized protein (145 aa).

It belongs to the SAP18 family.

The protein resides in the cytoplasm. It is found in the nucleus. This is an uncharacterized protein from Schizosaccharomyces pombe (strain 972 / ATCC 24843) (Fission yeast).